A 117-amino-acid polypeptide reads, in one-letter code: Large ribosomal subunit protein bL20 (117 aa).

The protein belongs to the bacterial ribosomal protein bL20 family.

Its function is as follows. Binds directly to 23S ribosomal RNA and is necessary for the in vitro assembly process of the 50S ribosomal subunit. It is not involved in the protein synthesizing functions of that subunit. The chain is Large ribosomal subunit protein bL20 from Marinobacter nauticus (strain ATCC 700491 / DSM 11845 / VT8) (Marinobacter aquaeolei).